We begin with the raw amino-acid sequence, 185 residues long: ATP-dependent protease subunit HslV (185 aa).

Thr-12 is a catalytic residue. Na(+) is bound by residues Ala-168, Cys-171, and Thr-174.

This sequence belongs to the peptidase T1B family. HslV subfamily. A double ring-shaped homohexamer of HslV is capped on each side by a ring-shaped HslU homohexamer. The assembly of the HslU/HslV complex is dependent on binding of ATP.

The protein localises to the cytoplasm. The catalysed reaction is ATP-dependent cleavage of peptide bonds with broad specificity.. Its activity is regulated as follows. Allosterically activated by HslU binding. Its function is as follows. Protease subunit of a proteasome-like degradation complex believed to be a general protein degrading machinery. The protein is ATP-dependent protease subunit HslV of Ruegeria pomeroyi (strain ATCC 700808 / DSM 15171 / DSS-3) (Silicibacter pomeroyi).